Consider the following 608-residue polypeptide: Elongation factor 4 (608 aa).

One can recognise a tr-type G domain in the interval 11 to 193 (DRIRNFSIIA…QIVQKIPAPS (183 aa)). GTP is bound by residues 23–28 (DHGKST) and 140–143 (NKID).

The protein belongs to the TRAFAC class translation factor GTPase superfamily. Classic translation factor GTPase family. LepA subfamily.

It localises to the cell membrane. It catalyses the reaction GTP + H2O = GDP + phosphate + H(+). Required for accurate and efficient protein synthesis under certain stress conditions. May act as a fidelity factor of the translation reaction, by catalyzing a one-codon backward translocation of tRNAs on improperly translocated ribosomes. Back-translocation proceeds from a post-translocation (POST) complex to a pre-translocation (PRE) complex, thus giving elongation factor G a second chance to translocate the tRNAs correctly. Binds to ribosomes in a GTP-dependent manner. The polypeptide is Elongation factor 4 (Anoxybacillus flavithermus (strain DSM 21510 / WK1)).